The following is a 1320-amino-acid chain: Bifunctional protein PutA (1320 aa).

The interval 228 to 574 is proline dehydrogenase; the sequence is LSRSLNRIIG…SFVNRIADTS (347 aa). The tract at residues 653-1119 is aldehyde dehydrogenase; sequence QPVAAGEMSP…LANRPESALA (467 aa). Catalysis depends on residues Glu-883 and Cys-917.

In the N-terminal section; belongs to the proline dehydrogenase family. This sequence in the C-terminal section; belongs to the aldehyde dehydrogenase family. Homodimer. FAD is required as a cofactor.

It catalyses the reaction L-proline + a quinone = (S)-1-pyrroline-5-carboxylate + a quinol + H(+). The catalysed reaction is L-glutamate 5-semialdehyde + NAD(+) + H2O = L-glutamate + NADH + 2 H(+). It participates in amino-acid degradation; L-proline degradation into L-glutamate; L-glutamate from L-proline: step 1/2. Its pathway is amino-acid degradation; L-proline degradation into L-glutamate; L-glutamate from L-proline: step 2/2. Its function is as follows. Oxidizes proline to glutamate for use as a carbon and nitrogen source and also function as a transcriptional repressor of the put operon. The chain is Bifunctional protein PutA (putA) from Escherichia coli (strain K12).